Consider the following 377-residue polypeptide: 1-deoxy-D-xylulose 5-phosphate reductoisomerase (377 aa).

The NADPH site is built by Thr-20, Gly-21, Ile-23, Asn-46, and Asn-115. Lys-116 contacts 1-deoxy-D-xylulose 5-phosphate. Glu-117 lines the NADPH pocket. A Mn(2+)-binding site is contributed by Asp-141. Residues Ser-142, Glu-143, Ser-166, and His-189 each contribute to the 1-deoxy-D-xylulose 5-phosphate site. Glu-143 lines the Mn(2+) pocket. Gly-195 lines the NADPH pocket. 1-deoxy-D-xylulose 5-phosphate contacts are provided by Ser-202, Asn-207, Lys-208, and Glu-211. Position 211 (Glu-211) interacts with Mn(2+).

This sequence belongs to the DXR family. Mg(2+) is required as a cofactor. The cofactor is Mn(2+).

The catalysed reaction is 2-C-methyl-D-erythritol 4-phosphate + NADP(+) = 1-deoxy-D-xylulose 5-phosphate + NADPH + H(+). It participates in isoprenoid biosynthesis; isopentenyl diphosphate biosynthesis via DXP pathway; isopentenyl diphosphate from 1-deoxy-D-xylulose 5-phosphate: step 1/6. Functionally, catalyzes the NADPH-dependent rearrangement and reduction of 1-deoxy-D-xylulose-5-phosphate (DXP) to 2-C-methyl-D-erythritol 4-phosphate (MEP). This Malacoplasma penetrans (strain HF-2) (Mycoplasma penetrans) protein is 1-deoxy-D-xylulose 5-phosphate reductoisomerase.